A 231-amino-acid chain; its full sequence is Small ribosomal subunit protein uS3 (231 aa).

The 70-residue stretch at 17 to 86 (VEQYLNKELK…SPQVEVQQVA (70 aa)) folds into the KH type-2 domain.

The protein belongs to the universal ribosomal protein uS3 family. In terms of assembly, part of the 30S ribosomal subunit.

In terms of biological role, binds the lower part of the 30S subunit head. In Methanocorpusculum labreanum (strain ATCC 43576 / DSM 4855 / Z), this protein is Small ribosomal subunit protein uS3.